Reading from the N-terminus, the 65-residue chain is Neurotoxin Bot2 (65 aa).

The LCN-type CS-alpha/beta domain occupies arginine 2–histidine 64. Intrachain disulfides connect cysteine 12–cysteine 63, cysteine 16–cysteine 36, cysteine 22–cysteine 46, and cysteine 26–cysteine 48. Phenylalanine amide is present on phenylalanine 65.

Belongs to the long (4 C-C) scorpion toxin superfamily. Sodium channel inhibitor family. Alpha subfamily. As to expression, expressed by the venom gland.

The protein localises to the secreted. Binds to sodium channels (Nav) and inhibits the inactivation of the activated channels, thereby blocking neuronal transmission. The chain is Neurotoxin Bot2 from Buthus occitanus tunetanus (Common European scorpion).